Consider the following 228-residue polypeptide: L-ribulose-5-phosphate 4-epimerase UlaF (228 aa).

Residues 26 to 27, 43 to 44, and 72 to 73 each bind substrate; these read GN, SG, and SS. Zn(2+) contacts are provided by Asp74, His93, and His95. Asp118 serves as the catalytic Proton donor/acceptor. Zn(2+) is bound at residue His167. Catalysis depends on Tyr225, which acts as the Proton donor/acceptor.

This sequence belongs to the aldolase class II family. AraD/FucA subfamily. The cofactor is Zn(2+).

The catalysed reaction is L-ribulose 5-phosphate = D-xylulose 5-phosphate. Its pathway is cofactor degradation; L-ascorbate degradation; D-xylulose 5-phosphate from L-ascorbate: step 4/4. Its function is as follows. Catalyzes the isomerization of L-ribulose 5-phosphate to D-xylulose 5-phosphate. Is involved in the anaerobic L-ascorbate utilization. In Salmonella choleraesuis (strain SC-B67), this protein is L-ribulose-5-phosphate 4-epimerase UlaF.